A 165-amino-acid chain; its full sequence is Phosphopantetheine adenylyltransferase (165 aa).

Position 9 (T9) interacts with substrate. ATP contacts are provided by residues T9–F10 and H17. The substrate site is built by K41, L78, and R92. ATP contacts are provided by residues G93–R95, E103, and H128–K134.

This sequence belongs to the bacterial CoaD family. In terms of assembly, homohexamer. The cofactor is Mg(2+).

The protein localises to the cytoplasm. The catalysed reaction is (R)-4'-phosphopantetheine + ATP + H(+) = 3'-dephospho-CoA + diphosphate. Its pathway is cofactor biosynthesis; coenzyme A biosynthesis; CoA from (R)-pantothenate: step 4/5. In terms of biological role, reversibly transfers an adenylyl group from ATP to 4'-phosphopantetheine, yielding dephospho-CoA (dPCoA) and pyrophosphate. The polypeptide is Phosphopantetheine adenylyltransferase (Ruegeria sp. (strain TM1040) (Silicibacter sp.)).